A 518-amino-acid chain; its full sequence is Arrestin-related trafficking adapter 10 (518 aa).

Residue Lys118 forms a Glycyl lysine isopeptide (Lys-Gly) (interchain with G-Cter in ubiquitin) linkage.

This sequence belongs to the ART10 family. Interacts with RSP5. Post-translationally, ubiquitinated by RSP5.

The protein resides in the cytoplasm. May regulate endocytosis by recruiting RSP5 ubiquitin ligase activity to specific plasma membrane proteins in response to extracellular stimuli. The sequence is that of Arrestin-related trafficking adapter 10 (ART10) from Saccharomyces cerevisiae (strain ATCC 204508 / S288c) (Baker's yeast).